Reading from the N-terminus, the 417-residue chain is NADH-quinone oxidoreductase subunit D (417 aa).

The protein belongs to the complex I 49 kDa subunit family. In terms of assembly, NDH-1 is composed of 14 different subunits. Subunits NuoB, C, D, E, F, and G constitute the peripheral sector of the complex.

It is found in the cell inner membrane. The catalysed reaction is a quinone + NADH + 5 H(+)(in) = a quinol + NAD(+) + 4 H(+)(out). Functionally, NDH-1 shuttles electrons from NADH, via FMN and iron-sulfur (Fe-S) centers, to quinones in the respiratory chain. The immediate electron acceptor for the enzyme in this species is believed to be ubiquinone. Couples the redox reaction to proton translocation (for every two electrons transferred, four hydrogen ions are translocated across the cytoplasmic membrane), and thus conserves the redox energy in a proton gradient. The protein is NADH-quinone oxidoreductase subunit D of Leptothrix cholodnii (strain ATCC 51168 / LMG 8142 / SP-6) (Leptothrix discophora (strain SP-6)).